Consider the following 207-residue polypeptide: Macrophage immunometabolism regulator (207 aa).

Methionine 1 carries the N-acetylmethionine modification. The disordered stretch occupies residues 1–41 (MEVDINGDSRSTLTTLPLPVAEGSSPGKAEAEKPRCSSTPC). Phosphoserine is present on residues serine 25 and serine 167.

This sequence belongs to the UNC119-binding protein family. In terms of assembly, interacts with UNC119 and UNC119B; interaction preferentially takes place when UNC119 and UNC119B are unliganded with myristoylated proteins. In terms of tissue distribution, highly expressed in photoreceptors.

It localises to the cytoplasm. The protein resides in the cell projection. Its subcellular location is the cilium. Its function is as follows. Regulates the macrophage function, by enhancing the resolution of inflammation and wound repair functions mediated by M2 macrophages. The regulation of macrophage function is, due at least in part, to its ability to inhibit glycolysis. May also play a role in trafficking of proteins via its interaction with UNC119 and UNC119B cargo adapters: may help the release of UNC119 and UNC119B cargo or the recycling of UNC119 and UNC119B. May play a role in ciliary membrane localization via its interaction with UNC119B and protein transport into photoreceptor cells. In Mus musculus (Mouse), this protein is Macrophage immunometabolism regulator.